Here is a 208-residue protein sequence, read N- to C-terminus: Ras-related protein Rab-6B (208 aa).

GTP contacts are provided by residues 20–27 (GEQSVGKT), T45, 68–72 (DTAGQ), and 126–129 (NKTD). An Effector region motif is present at residues 42–50 (YQATIGIDF). S-geranylgeranyl cysteine attachment occurs at residues C206 and C208. C208 bears the Cysteine methyl ester mark.

It belongs to the small GTPase superfamily. Rab family. Interacts (GTP-bound) with BICD1 (via C-terminus); the interaction is direct. Interacts (GDP-bound) with DYNLRB1. Interacts (GTP-bound) with APBA1/MINT1. Interacts (GTP-bound) with VPS13B.

It is found in the golgi apparatus membrane. The protein localises to the endoplasmic reticulum-Golgi intermediate compartment. Its subcellular location is the cytoplasmic vesicle. It catalyses the reaction GTP + H2O = GDP + phosphate + H(+). Its activity is regulated as follows. Regulated by guanine nucleotide exchange factors (GEFs) which promote the exchange of bound GDP for free GTP, GTPase activating proteins (GAPs) which increase the GTP hydrolysis activity, and GDP dissociation inhibitors which inhibit the dissociation of the nucleotide from the GTPase. The small GTPases Rab are key regulators of intracellular membrane trafficking, from the formation of transport vesicles to their fusion with membranes. Rabs cycle between active GTP-bound and inactive GDP-bound states. In their active state, drive transport of vesicular carriers from donor organelles to acceptor organelles to regulate the membrane traffic that maintains organelle identity and morphology. Recruits VPS13B to the Golgi membrane. Regulates the compacted morphology of the Golgi. Seems to have a role in retrograde membrane traffic at the level of the Golgi complex. May function in retrograde transport in neuronal cells. Plays a role in neuron projection development. The polypeptide is Ras-related protein Rab-6B (RAB6B) (Bos taurus (Bovine)).